We begin with the raw amino-acid sequence, 260 residues long: LIM and SH3 domain protein 1 (260 aa).

N-acetylmethionine is present on M1. Residues 5-56 (CARCCKIVYPTEKVNCLDKFWHKACFHCETCKMTLNMKNYKGYEKKPYCNAH) enclose the LIM zinc-binding domain. K42 is subject to N6-acetyllysine. Nebulin repeat units follow at residues 61 to 95 (SFTM…KNKG) and 97 to 131 (GFSV…KSRM). T68 bears the Phosphothreonine mark. Position 75 is an N6-methyllysine (K75). Residue S99 is modified to Phosphoserine. At T104 the chain carries Phosphothreonine. K112 is subject to N6-succinyllysine. A phosphoserine mark is found at S118 and S134. Residues 123 to 204 (HEEFEKSRMG…QRSAPGGGGK (82 aa)) are disordered. Positions 140-155 (ECERRDPQESSYRRPQ) are enriched in basic and acidic residues. The span at 171 to 180 (QQPQQQPAAQ) shows a compositional bias: low complexity. Positions 201–260 (GGGKRYRAVYDYSAADEDEVSFQDGDTIVNVQQIDDGWMYGTVERTGDTGMLPANYVEAI) constitute an SH3 domain.

Interacts with F-actin. Interacts with ANKRD54. Interacts with KBTBD10. Phosphorylated.

The protein localises to the cytoplasm. Its subcellular location is the cell cortex. The protein resides in the cytoskeleton. Its function is as follows. Plays an important role in the regulation of dynamic actin-based, cytoskeletal activities. Agonist-dependent changes in LASP1 phosphorylation may also serve to regulate actin-associated ion transport activities, not only in the parietal cell but also in certain other F-actin-rich secretory epithelial cell types. This is LIM and SH3 domain protein 1 (LASP1) from Bos taurus (Bovine).